Consider the following 182-residue polypeptide: ATP synthase subunit b, chloroplastic (182 aa).

A helical membrane pass occupies residues 33–55 (VLNIMLLLFGLIYVLKQFLGSLL).

Belongs to the ATPase B chain family. As to quaternary structure, F-type ATPases have 2 components, F(1) - the catalytic core - and F(0) - the membrane proton channel. F(1) has five subunits: alpha(3), beta(3), gamma(1), delta(1), epsilon(1). F(0) has four main subunits: a(1), b(1), b'(1) and c(10-14). The alpha and beta chains form an alternating ring which encloses part of the gamma chain. F(1) is attached to F(0) by a central stalk formed by the gamma and epsilon chains, while a peripheral stalk is formed by the delta, b and b' chains.

It is found in the plastid. Its subcellular location is the chloroplast thylakoid membrane. Functionally, f(1)F(0) ATP synthase produces ATP from ADP in the presence of a proton or sodium gradient. F-type ATPases consist of two structural domains, F(1) containing the extramembraneous catalytic core and F(0) containing the membrane proton channel, linked together by a central stalk and a peripheral stalk. During catalysis, ATP synthesis in the catalytic domain of F(1) is coupled via a rotary mechanism of the central stalk subunits to proton translocation. In terms of biological role, component of the F(0) channel, it forms part of the peripheral stalk, linking F(1) to F(0). The chain is ATP synthase subunit b, chloroplastic from Antithamnion sp. (Red alga).